Reading from the N-terminus, the 238-residue chain is Ribosomal RNA small subunit methyltransferase G (238 aa).

Residues glycine 77, phenylalanine 82, 128–129, and arginine 147 contribute to the S-adenosyl-L-methionine site; that span reads AE. Residues 219–238 are disordered; it reads KETPNKYPRKPGTPNKLPIE.

This sequence belongs to the methyltransferase superfamily. RNA methyltransferase RsmG family.

The protein localises to the cytoplasm. Functionally, specifically methylates the N7 position of guanine in position 535 of 16S rRNA. In Listeria monocytogenes serovar 1/2a (strain ATCC BAA-679 / EGD-e), this protein is Ribosomal RNA small subunit methyltransferase G.